The following is an 850-amino-acid chain: Mitogen-activated protein kinase kinase kinase 11 (850 aa).

Ser-11 bears the Phosphoserine mark. The span at 18-31 (GSGSGGGGGSGGVR) shows a compositional bias: gly residues. Residues 18-37 (GSGSGGGGGSGGVRPEGSPK) are disordered. Ser-35 is modified (phosphoserine). Positions 42–106 (YANPVWTALF…PSNYVSRGGG (65 aa)) constitute an SH3 domain. The region spanning 118–380 (LRLEEVIGIG…ASILQQLEAL (263 aa)) is the Protein kinase domain. ATP is bound by residues 124 to 132 (IGIGGFGKV) and Lys-145. Residue Asp-242 is the Proton acceptor of the active site. At Thr-278 the chain carries Phosphothreonine; by autocatalysis. The residue at position 282 (Ser-282) is a Phosphoserine; by autocatalysis and MAP4K1. Ser-395 is subject to Phosphoserine. Leucine-zipper stretches follow at residues 404-425 (IQGL…EEEL) and 439-460 (LRRR…ELTL). Phosphoserine is present on residues Ser-508, Ser-525, Ser-549, Ser-556, and Ser-557. The tract at residues 536-850 (LEPAESGQTW…QAPWAPEAGP (315 aa)) is disordered. A compositionally biased stretch (basic and acidic residues) spans 551 to 563 (RRLDDSSNGERRA). Positions 598–610 (SSPLGSPSTPPAL) are enriched in low complexity. Ser-655 is modified (phosphoserine). Positions 677–693 (TAPPPAQMASPCPPDLP) are enriched in pro residues. Position 712 is a phosphothreonine (Thr-712). Phosphoserine occurs at positions 728, 731, 743, 751, 761, 773, 792, 796, and 818. The span at 790–802 (RPSPLPSPQPAPR) shows a compositional bias: pro residues. Positions 803 to 819 (RAPWTLFPDSDPFWDSP) are enriched in low complexity.

The protein belongs to the protein kinase superfamily. STE Ser/Thr protein kinase family. MAP kinase kinase kinase subfamily. As to quaternary structure, homodimer; undergoes dimerization during activation. Interacts with MAP2K4/MKK4. Interacts with MAP2K7/MKK7. Found in a complex with SH3RF1, RAC1, MAP2K7/MKK7, MAPK8IP1/JIP1 and MAPK8/JNK1. It depends on Mg(2+) as a cofactor. In terms of processing, autophosphorylation on serine and threonine residues within the activation loop plays a role in enzyme activation. Thr-278 is likely to be the main autophosphorylation site. Phosphorylation of Ser-556 and Ser-557 is induced by CDC42.

The protein resides in the cytoplasm. The protein localises to the cytoskeleton. It localises to the microtubule organizing center. It is found in the centrosome. It carries out the reaction L-seryl-[protein] + ATP = O-phospho-L-seryl-[protein] + ADP + H(+). The catalysed reaction is L-threonyl-[protein] + ATP = O-phospho-L-threonyl-[protein] + ADP + H(+). With respect to regulation, homodimerization via the leucine zipper domains is required for autophosphorylation and subsequent activation. Activates the JUN N-terminal pathway. Required for serum-stimulated cell proliferation and for mitogen and cytokine activation of MAPK14 (p38), MAPK3 (ERK) and MAPK8 (JNK1) through phosphorylation and activation of MAP2K4/MKK4 and MAP2K7/MKK7. Plays a role in mitogen-stimulated phosphorylation and activation of BRAF, but does not phosphorylate BRAF directly. Influences microtubule organization during the cell cycle. The sequence is that of Mitogen-activated protein kinase kinase kinase 11 (Map3k11) from Rattus norvegicus (Rat).